We begin with the raw amino-acid sequence, 402 residues long: Protein rds1 (402 aa).

Its function is as follows. May have a function in stress-related responses of the cell. In Schizosaccharomyces pombe (strain 972 / ATCC 24843) (Fission yeast), this protein is Protein rds1 (rds1).